Reading from the N-terminus, the 1959-residue chain is Sodium channel protein type 10 subunit alpha (1959 aa).

Residues 1–125 are Cytoplasmic-facing; sequence MEFPIGSVGT…FNLIRRTAIK (125 aa). The tract at residues 30–53 is disordered; it reads AHGAAKKARAKHGERKGQDEKPRP. The segment covering 33–43 has biased composition (basic residues); the sequence is AAKKARAKHGE. Over residues 44–53 the composition is skewed to basic and acidic residues; the sequence is RKGQDEKPRP. Residues 116–404 form an I repeat; it reads FNLIRRTAIK…VTMAYEEQNQ (289 aa). A helical transmembrane segment spans residues 126–149; sequence VSVHAWFSIFITITILFNCVCMTQ. At 150 to 154 the chain is on the extracellular side; the sequence is NDLPE. The helical transmembrane segment at 155–174 threads the bilayer; that stretch reads KIEYAFTVIYTFEALIKILA. The Cytoplasmic portion of the chain corresponds to 175–187; that stretch reads RGFCLNEFTYLRD. Residues 188–206 form a helical membrane-spanning segment; it reads PWNWLDFSVITLAYVGAAI. Over 207–212 the chain is Extracellular; it reads DLRGIS. A helical; Voltage-sensor transmembrane segment spans residues 213-232; the sequence is GLRTFRVLRALKTVSVIPGL. At 233 to 248 the chain is on the cytoplasmic side; it reads KVIVGALIHSVRKLAD. Residues 249-272 form a helical membrane-spanning segment; that stretch reads VTILTVFCLSVFALVGLQLFKGNL. Topologically, residues 273 to 340 are extracellular; the sequence is KNKCIKRSTD…PDFNYTSFDS (68 aa). Residues cysteine 276 and cysteine 318 are joined by a disulfide bond. N-linked (GlcNAc...) asparagine glycans are attached at residues asparagine 288, asparagine 311, and asparagine 334. An intramembrane region (pore-forming) is located at residues 341 to 365; it reads FAWAFLSLFRLMTQDSWERLYQQTL. The Extracellular portion of the chain corresponds to 366–372; it reads RASGKMY. Residues 373-398 traverse the membrane as a helical segment; sequence MVFFVLVIFLGSFYLVNLILAVVTMA. Residues 399 to 659 are Cytoplasmic-facing; sequence YEEQNQATIA…KWMKFKMVLF (261 aa). Phosphoserine occurs at positions 440, 443, 466, and 478. Disordered stretches follow at residues 442-484 and 510-578; these read HSHN…YNQR and SQDV…ELTT. A compositionally biased stretch (polar residues) spans 475-484; sequence SPQSDPYNQR. Over residues 523 to 533 the composition is skewed to basic and acidic residues; the sequence is GVFHGDHESHR. A phosphoserine mark is found at serine 612 and serine 615. One copy of the II repeat lies at 647 to 911; it reads CCPKWMKFKM…EDDGEVNNLQ (265 aa). Residues 660 to 684 traverse the membrane as a helical segment; it reads ELVTDPFAELTITLCIVVNTIFMAM. The Extracellular portion of the chain corresponds to 685-695; sequence EHYPMTDAFDA. A helical transmembrane segment spans residues 696–719; the sequence is MLQAGNIVFTVFFTMEMAFKIIAF. Residues 720 to 727 are Cytoplasmic-facing; that stretch reads DPYYYFQK. A helical membrane pass occupies residues 728-747; sequence KWNVFDCVIVTVSLLELSIA. At 748 to 753 the chain is on the extracellular side; it reads KKGSLS. Residues 754 to 773 form a helical; Voltage-sensor membrane-spanning segment; it reads VLRTFRLLRVFKLAKSWPTL. The Cytoplasmic portion of the chain corresponds to 774 to 789; that stretch reads NTLIKIIGNSVGALGN. Residues 790–810 form a helical membrane-spanning segment; it reads LTFILAIIVFIFALVGKQLLG. The Extracellular segment spans residues 811-834; the sequence is EDYGCRKDGTALWNEGQLRWHMCD. Positions 835–855 form an intramembrane region, pore-forming; it reads FFHSFLVIFRILCGEWIENMW. Residues 856–864 are Extracellular-facing; that stretch reads VCMQVSEKS. A disulfide bridge links cysteine 857 with cysteine 866. Residues 865–890 form a helical membrane-spanning segment; the sequence is ICLILFLTVMVLGNLVVLNLFIALLL. Residues 891–1149 lie on the Cytoplasmic side of the membrane; it reads NSFSADNLTA…GWQVRKTCYR (259 aa). Residues 1004-1016 are compositionally biased toward acidic residues; the sequence is GESDLDELEEDIE. Disordered stretches follow at residues 1004–1034 and 1071–1097; these read GESD…QQDQ and ATPQ…PDPE. The III repeat unit spans residues 1142–1451; it reads QVRKTCYRIV…KKYYNAMKKL (310 aa). Residues 1150–1173 form a helical membrane-spanning segment; it reads IVEHSWFESFIIFMILLSSGALAF. Residues 1174 to 1186 are Extracellular-facing; that stretch reads EDNYLEQKPRVKS. A helical transmembrane segment spans residues 1187 to 1212; it reads MLEYTDRVFTFIFVFEMLLKWVAYGF. The Cytoplasmic portion of the chain corresponds to 1213–1218; that stretch reads KKYFTN. A helical membrane pass occupies residues 1219 to 1240; the sequence is AWCWLDFLIVNISLTSLIAKIL. At 1241-1244 the chain is on the extracellular side; the sequence is DYSD. Residues 1245–1266 traverse the membrane as a helical; Voltage-sensor segment; the sequence is VASLKALRTLRALRPLRALSRF. Residues 1267–1285 are Cytoplasmic-facing; it reads EGMRVVVDALVGAIPSIMN. The helical transmembrane segment at 1286–1313 threads the bilayer; the sequence is VLLVCLIFWLIFSIMGVNLFAGKFSRCI. Topologically, residues 1314 to 1355 are extracellular; the sequence is DTSNNPFSVVNSTIVNNKSECRNQNHTGHFFWVNVKVNFDNV. The pore-forming intramembrane region spans 1356-1377; that stretch reads AMGYLALLQVATFKGWMDIMYA. At 1378–1393 the chain is on the extracellular side; it reads AVDSREINSQPQWEDN. The helical transmembrane segment at 1394–1420 threads the bilayer; it reads LYMYLYFVVFIIFGGFFTLNLFVGVII. Topologically, residues 1421 to 1473 are cytoplasmic; that stretch reads DNFNQQKKKLGGQDIFMTEEQKKYYNAMKKLGSKKPQKPIPRPLNKYQGFVFD. Position 1453 is a phosphoserine; by PKC (serine 1453). An IV repeat occupies 1460–1759; the sequence is IPRPLNKYQG…WEKFDPEATQ (300 aa). A helical membrane pass occupies residues 1474–1497; it reads IVTRQAFDIIIMVLICLNMITMMV. The Extracellular segment spans residues 1498–1508; it reads ETDGQSEEKTK. Residues 1509–1532 form a helical membrane-spanning segment; sequence ILGRINQFFVAVFTGECVMKMFAL. Residues 1533–1538 lie on the Cytoplasmic side of the membrane; that stretch reads RQYYFT. A helical membrane pass occupies residues 1539-1562; sequence NGWNVFDFIVVILSIGSLVFSAIL. The Extracellular portion of the chain corresponds to 1563–1574; that stretch reads KSLESYFSPTLF. The helical; Voltage-sensor transmembrane segment at 1575 to 1596 threads the bilayer; it reads RVIRLARIGRILRLIRAAKGIR. The Cytoplasmic portion of the chain corresponds to 1597-1611; the sequence is TLLFALMMSLPALFN. A helical transmembrane segment spans residues 1612–1634; it reads IGLLLFLVMFIYSIFGMASFANV. Over 1635–1648 the chain is Extracellular; that stretch reads VEEAGIDDMFNFQT. Residues 1649–1671 constitute an intramembrane region (pore-forming); that stretch reads FGNSMLCLFQITTSAGWDGLLSP. Topologically, residues 1672–1699 are extracellular; that stretch reads ILNTGPPYCDPNLSNNNTSKGNCGSPTV. Residues 1700 to 1724 form a helical membrane-spanning segment; that stretch reads GIVFFTTYIIISFLIVVNMYIAVIL. Over 1725–1959 the chain is Cytoplasmic; it reads ENFNVATEES…SKEGDSPGPQ (235 aa). Residues 1853 to 1882 form the IQ domain; sequence EDISATVIQKAYRSYVLQRSLTLSNPLRVP. Residues 1901–1959 form a disordered region; sequence ANDSGRLPDKSETTSATSFPPSYDSVTRGLSDRVNISTSNSMHNEDEVTSKEGDSPGPQ. The segment covering 1943–1959 has biased composition (basic and acidic residues); that stretch reads HNEDEVTSKEGDSPGPQ.

It belongs to the sodium channel (TC 1.A.1.10) family. Nav1.8/SCN10A subfamily. In terms of assembly, the channel consists of an ion conducting pore forming alpha-subunit regulated by one or more associated auxiliary subunits SCN1B, SCN2B and SCN3B; electrophysiological properties may vary depending on the type of the associated beta subunits. Found in a number of complexes with PRX, DYNLT1 and PDZD2. Interacts with proteins such as FSTL1, PRX, DYNLT1, PDZD2, S100A10 and many others. Interacts with NEDD4 and NEDD4L. In terms of processing, ubiquitinated by NEDD4L; which promotes its endocytosis. Post-translationally, phosphorylation at Ser-1453 by PKC in a highly conserved cytoplasmic loop slows inactivation of the sodium channel and reduces peak sodium currents. Lacks the cysteine which covalently binds the conotoxin GVIIJ. This cysteine (position 816) is speculated in other sodium channel subunits alpha to be implied in covalent binding with the sodium channel subunit beta-2 or beta-4.

It is found in the cell membrane. It catalyses the reaction Na(+)(in) = Na(+)(out). Tetrodotoxin-resistant channel that mediates the voltage-dependent sodium ion permeability of excitable membranes. Assuming opened or closed conformations in response to the voltage difference across the membrane, the protein forms a sodium-selective channel through which sodium ions may pass in accordance with their electrochemical gradient. Plays a role in neuropathic pain mechanisms. The sequence is that of Sodium channel protein type 10 subunit alpha (Scn10a) from Onychomys torridus (Southern grasshopper mouse).